The primary structure comprises 487 residues: Bifunctional protein HldE (487 aa).

The interval 1–329 (MLHAVETAFY…GALLTDATYE (329 aa)) is ribokinase. 204–207 (NRGE) lines the ATP pocket. Asp274 is a catalytic residue. Residues 356-487 (FTNGCFDLLH…GIVQRISAQK (132 aa)) form a cytidylyltransferase region.

It in the N-terminal section; belongs to the carbohydrate kinase PfkB family. In the C-terminal section; belongs to the cytidylyltransferase family. Homodimer.

It catalyses the reaction D-glycero-beta-D-manno-heptose 7-phosphate + ATP = D-glycero-beta-D-manno-heptose 1,7-bisphosphate + ADP + H(+). The catalysed reaction is D-glycero-beta-D-manno-heptose 1-phosphate + ATP + H(+) = ADP-D-glycero-beta-D-manno-heptose + diphosphate. It functions in the pathway nucleotide-sugar biosynthesis; ADP-L-glycero-beta-D-manno-heptose biosynthesis; ADP-L-glycero-beta-D-manno-heptose from D-glycero-beta-D-manno-heptose 7-phosphate: step 1/4. Its pathway is nucleotide-sugar biosynthesis; ADP-L-glycero-beta-D-manno-heptose biosynthesis; ADP-L-glycero-beta-D-manno-heptose from D-glycero-beta-D-manno-heptose 7-phosphate: step 3/4. Functionally, catalyzes the phosphorylation of D-glycero-D-manno-heptose 7-phosphate at the C-1 position to selectively form D-glycero-beta-D-manno-heptose-1,7-bisphosphate. In terms of biological role, catalyzes the ADP transfer from ATP to D-glycero-beta-D-manno-heptose 1-phosphate, yielding ADP-D-glycero-beta-D-manno-heptose. The chain is Bifunctional protein HldE from Magnetococcus marinus (strain ATCC BAA-1437 / JCM 17883 / MC-1).